Here is a 1092-residue protein sequence, read N- to C-terminus: NAD-specific glutamate dehydrogenase (1092 aa).

Residue lysine 626 is part of the active site.

It belongs to the Glu/Leu/Phe/Val dehydrogenases family. Homotetramer. Interacts with NNK1. Post-translationally, phosphorylated by a complex containing the NNK1 kinase.

The catalysed reaction is L-glutamate + NAD(+) + H2O = 2-oxoglutarate + NH4(+) + NADH + H(+). NAD(+)-dependent glutamate dehydrogenase which degrades glutamate to ammonia and alpha-ketoglutarate. This chain is NAD-specific glutamate dehydrogenase (GDH2), found in Saccharomyces cerevisiae (strain ATCC 204508 / S288c) (Baker's yeast).